Consider the following 663-residue polypeptide: uncharacterized protein (663 aa).

The signal sequence occupies residues 1 to 29 (MLDIGVIGRLKFATAFMAMSLLLVPAAEA).

It belongs to the bacterial solute-binding protein 5 family.

It localises to the periplasm. Possible binding-protein with either a transport or enzymatic activity. This is an uncharacterized protein from Sinorhizobium fredii (strain NBRC 101917 / NGR234).